Reading from the N-terminus, the 123-residue chain is Putative membrane protein insertion efficiency factor (123 aa).

The protein belongs to the UPF0161 family.

The protein resides in the cell inner membrane. In terms of biological role, could be involved in insertion of integral membrane proteins into the membrane. The chain is Putative membrane protein insertion efficiency factor from Beijerinckia indica subsp. indica (strain ATCC 9039 / DSM 1715 / NCIMB 8712).